A 389-amino-acid chain; its full sequence is Mating-type protein MAT-1 (389 aa).

The segment at residues 70-127 (KAKKALNAFVGFRCYYISIPHFKSWPMKKLSNLIGLLWETDPNKSLWSLMTKAWSAIR) is a DNA-binding region (alpha box).

This sequence belongs to the MATALPHA1 family.

It is found in the nucleus. Mating type proteins are sequence specific DNA-binding proteins that act as master switches in fungal differentiation by controlling gene expression in a cell type-specific fashion. Transcriptional activator that induces the transcription of alpha-specific genes. The chain is Mating-type protein MAT-1 (MAT1) from Alternaria alternata (Alternaria rot fungus).